We begin with the raw amino-acid sequence, 625 residues long: Procollagen galactosyltransferase 2 (625 aa).

A signal peptide spans 1-26 (MAARLATVACALFLLSSALLRLGCRA). Residues Asn-96, Asn-184, Asn-381, and Asn-579 are each glycosylated (N-linked (GlcNAc...) asparagine). Positions 597-625 (QGHIRSTAKNTEALPPPTSLDTVPSRDEL) are disordered. The short motif at 622-625 (RDEL) is the Prevents secretion from ER element.

It belongs to the glycosyltransferase 25 family.

The protein localises to the endoplasmic reticulum lumen. It carries out the reaction (5R)-5-hydroxy-L-lysyl-[collagen] + UDP-alpha-D-galactose = (5R)-5-O-(beta-D-galactosyl)-5-hydroxy-L-lysyl-[collagen] + UDP + H(+). Functionally, beta-galactosyltransferase that transfers beta-galactose to hydroxylysine residues of collagen. In Mus musculus (Mouse), this protein is Procollagen galactosyltransferase 2 (Colgalt2).